We begin with the raw amino-acid sequence, 131 residues long: Lymphocyte antigen 6C2 (131 aa).

Residues 1–26 form the signal peptide; sequence MDSTHATKSCLLILLVALLCAGRAQG. The 90-residue stretch at 27–116 folds into the UPAR/Ly6 domain; the sequence is LQCYECYGVP…TAGSTWTMAG (90 aa). Disulfide bonds link Cys29–Cys53, Cys32–Cys41, Cys46–Cys74, Cys78–Cys95, and Cys96–Cys101. Gly109 is lipidated: GPI-anchor amidated glycine. Residues 110-131 constitute a propeptide, removed in mature form; the sequence is STWTMAGVLLFSLSSVILQTLL.

The protein resides in the cell membrane. In Mus musculus (Mouse), this protein is Lymphocyte antigen 6C2 (Ly6c2).